Reading from the N-terminus, the 522-residue chain is Sulfite reductase [NADPH] flavoprotein alpha-component (522 aa).

In terms of domain architecture, Flavodoxin-like spans 60-198 (ITILFGSQTG…DTERWSSDAL (139 aa)). The tract at residues 217–242 (TLRSHQDLRSHQEQSRNRARPYDKDN) is disordered. Residues 220–242 (SHQDLRSHQEQSRNRARPYDKDN) show a composition bias toward basic and acidic residues. The 159-residue stretch at 241–399 (DNPYTATLLE…VAPYRAFLQQ (159 aa)) folds into the FAD-binding FR-type domain.

Alpha(8)-beta(8). The alpha component is a flavoprotein, the beta component is a hemoprotein. It depends on FAD as a cofactor. The cofactor is FMN.

The enzyme catalyses hydrogen sulfide + 3 NADP(+) + 3 H2O = sulfite + 3 NADPH + 4 H(+). Functionally, catalyzes the 6-electron reduction of sulfite to sulfide. This is one of several activities required for the biosynthesis of L-cysteine from sulfate. The flavo-protein component catalyzes the electron flow from NADPH -&gt; FAD -&gt; FMN to the hemoprotein component. In Thiocapsa roseopersicina, this protein is Sulfite reductase [NADPH] flavoprotein alpha-component (cysJ).